The sequence spans 192 residues: Beta-glucosidase (192 aa).

The protein belongs to the glycosyl hydrolase 3 family.

The enzyme catalyses Hydrolysis of terminal, non-reducing beta-D-glucosyl residues with release of beta-D-glucose.. It participates in glycan metabolism; cellulose degradation. The sequence is that of Beta-glucosidase from Schizophyllum commune (Split gill fungus).